A 565-amino-acid polypeptide reads, in one-letter code: NAD-dependent malic enzyme (565 aa).

Residue Tyr-104 is the Proton donor of the active site. Residue Arg-157 participates in NAD(+) binding. Catalysis depends on Lys-175, which acts as the Proton acceptor. A divalent metal cation contacts are provided by Glu-246, Asp-247, and Asp-270. NAD(+)-binding residues include Asp-270 and Asn-418.

This sequence belongs to the malic enzymes family. Homotetramer. The cofactor is Mg(2+). It depends on Mn(2+) as a cofactor.

It carries out the reaction (S)-malate + NAD(+) = pyruvate + CO2 + NADH. It catalyses the reaction oxaloacetate + H(+) = pyruvate + CO2. This Salmonella dublin (strain CT_02021853) protein is NAD-dependent malic enzyme.